The following is an 822-amino-acid chain: Lysine-specific histone demethylase 2 (822 aa).

Residues 1–11 are compositionally biased toward basic residues; the sequence is MATPRGRTKKK. Positions 1–47 are disordered; the sequence is MATPRGRTKKKASFDHSPDSLPLRSSGRQAKKKATETTDEDEDGGSE. Phosphoserine occurs at positions 13, 17, and 26. 12 residues coordinate Zn(2+): cysteine 53, cysteine 58, cysteine 65, cysteine 73, histidine 84, histidine 90, cysteine 92, cysteine 95, cysteine 142, cysteine 147, cysteine 169, and cysteine 185. Residues 133–193 form a CW-type zinc finger; sequence DQQLPYWVQC…HCSLPEDLRV (61 aa). At serine 247 the chain carries Phosphoserine. Positions 273–292 are GLYR1-binding; that stretch reads YQPNECGKALCVRPDVMELD. Residues 275 to 373 enclose the SWIRM domain; the sequence is PNECGKALCV…TGVLSVGADQ (99 aa). Position 383-439 (383-439) interacts with FAD; the sequence is KSVIIIGAGPAGLAAARQLHNFGIKVTVLEAKDRIGGRVWDDKSFKGVTVGRGAQIV. 3 histone H3-binding regions span residues 438 to 467, 487 to 498, and 538 to 572; these read IVNG…RCDL, FNALLDVVSEWR, and FHLS…AGDH. Residues 564 to 566 are GLYR1-binding; it reads FFA. FAD is bound by residues valine 598, glutamate 795, and 803 to 805; that span reads QTV. Residues 798-814 are GLYR1-binding; it reads NRHFPQTVTGAYLSGVR.

The protein belongs to the flavin monoamine oxidase family. As to quaternary structure, interacts with its cofactor GLYR1 at nucleosomes; this interaction stimulates H3K4me1 and H3K4me2 demethylation. In contrast to KDM1A, does not form a complex with RCOR1/CoREST. Possible accessory component of the polycomb repressive deubiquitinase (PR-DUB) complex, at least composed of BAP1, one of ASXL1, ASXL2 or (probably) ASXL3 and one of MBD5 or MBD6. The PR-DUB core associates with a number of accessory proteins, including FOXK1, FOXK2, KDM1B, HCFC1 and OGT; KDM1B specifically associates with ASXL2 PR-DUB complexes. It depends on FAD as a cofactor. Zn(2+) is required as a cofactor.

The protein localises to the nucleus. Its subcellular location is the chromosome. The enzyme catalyses N(6),N(6)-dimethyl-L-lysyl(4)-[histone H3] + 2 A + 2 H2O = L-lysyl(4)-[histone H3] + 2 formaldehyde + 2 AH2. It catalyses the reaction N(6)-methyl-L-lysyl(4)-[histone H3] + A + H2O = L-lysyl(4)-[histone H3] + formaldehyde + AH2. Its activity is regulated as follows. Histone H3K4me1 and H3K4me2 demethylase activity is inhibited by DNA, this inhibition is released in complex with GLYR1. Histone demethylase that demethylates 'Lys-4' of histone H3, a specific tag for epigenetic transcriptional activation, thereby acting as a corepressor. Required for de novo DNA methylation of a subset of imprinted genes during oogenesis. Acts by oxidizing the substrate by FAD to generate the corresponding imine that is subsequently hydrolyzed. Demethylates both mono- and di-methylated 'Lys-4' of histone H3. Has no effect on tri-methylated 'Lys-4', mono-, di- or tri-methylated 'Lys-9', mono-, di- or tri-methylated 'Lys-27', mono-, di- or tri-methylated 'Lys-36' of histone H3, or on mono-, di- or tri-methylated 'Lys-20' of histone H4. Alone, it is unable to demethylate H3K4me on nucleosomes and requires the presence of GLYR1 to achieve such activity, they form a multifunctional enzyme complex that modifies transcribed chromatin and facilitates Pol II transcription through nucleosomes. The protein is Lysine-specific histone demethylase 2 of Homo sapiens (Human).